We begin with the raw amino-acid sequence, 238 residues long: Probable 2-phosphosulfolactate phosphatase (238 aa).

Belongs to the ComB family. Mg(2+) is required as a cofactor.

It carries out the reaction (2R)-O-phospho-3-sulfolactate + H2O = (2R)-3-sulfolactate + phosphate. The polypeptide is Probable 2-phosphosulfolactate phosphatase (Carboxydothermus hydrogenoformans (strain ATCC BAA-161 / DSM 6008 / Z-2901)).